A 249-amino-acid polypeptide reads, in one-letter code: Protein twisted gastrulation (249 aa).

The signal sequence occupies residues 1–23 (MQLLCYFVILFVGIAPWSSLAND). The N-linked (GlcNAc...) asparagine glycan is linked to Asn199.

This sequence belongs to the twisted gastrulation protein family. As to quaternary structure, component of a complex composed of dpp, sog and tsg. First appears in stage 4 embryos, expressed in two domains: a broad mid-dorsal saddle and an anterior cap, expression between the domains is continuous across the dorsal midline. At stage 5, expression is refined into 4 graded stripes in the mid-dorsal region and a paired domain in the anterior region. During stages 7 and 8, anterior expression fades and the mid dorsal stripes are located between the anterior and posterior transverse furrow (ATF and PTF). Expressing cells become incorporated into the deepening PTF.

Its subcellular location is the secreted. Its function is as follows. Involved in dorsal-ventral patterning. Required for specification of a narrow strip of dorsal midline cells that will give rise to the amnioserosa, but not for specification of dorsal ectoderm cells. Inhibits BMP signaling; enhances the binding of sog to dpp, thus enhancing the antagonistic activity of sog. The sequence is that of Protein twisted gastrulation (tsg) from Drosophila melanogaster (Fruit fly).